We begin with the raw amino-acid sequence, 148 residues long: UPF0756 membrane protein YeaL (148 aa).

A run of 4 helical transmembrane segments spans residues Ala-14 to Val-34, Leu-51 to Leu-71, Leu-86 to Met-106, and Val-121 to Val-141.

The protein belongs to the UPF0756 family.

The protein resides in the cell membrane. The sequence is that of UPF0756 membrane protein YeaL from Escherichia coli (strain B / REL606).